Here is a 430-residue protein sequence, read N- to C-terminus: Serine--tRNA ligase (430 aa).

Residue 231 to 233 (TSE) participates in L-serine binding. 262–264 (RSE) serves as a coordination point for ATP. Glu-285 provides a ligand contact to L-serine. 349–352 (EISS) contributes to the ATP binding site. Ser-385 lines the L-serine pocket.

Belongs to the class-II aminoacyl-tRNA synthetase family. Type-1 seryl-tRNA synthetase subfamily. Homodimer. The tRNA molecule binds across the dimer.

Its subcellular location is the cytoplasm. It carries out the reaction tRNA(Ser) + L-serine + ATP = L-seryl-tRNA(Ser) + AMP + diphosphate + H(+). It catalyses the reaction tRNA(Sec) + L-serine + ATP = L-seryl-tRNA(Sec) + AMP + diphosphate + H(+). It participates in aminoacyl-tRNA biosynthesis; selenocysteinyl-tRNA(Sec) biosynthesis; L-seryl-tRNA(Sec) from L-serine and tRNA(Sec): step 1/1. Functionally, catalyzes the attachment of serine to tRNA(Ser). Is also able to aminoacylate tRNA(Sec) with serine, to form the misacylated tRNA L-seryl-tRNA(Sec), which will be further converted into selenocysteinyl-tRNA(Sec). This Ruegeria pomeroyi (strain ATCC 700808 / DSM 15171 / DSS-3) (Silicibacter pomeroyi) protein is Serine--tRNA ligase.